The sequence spans 150 residues: Actin-related protein 2/3 complex subunit 5-C (150 aa).

Residues 21-45 (NKFVDEEEAGEGQQGPDEGEVDSAI) are disordered.

Belongs to the ARPC5 family. As to quaternary structure, component of the Arp2/3 complex composed of actr2/arp2, actr3/arp3, arpc1 (arpc1a or arpc1b), arpc2, arpc3, arpc4 and arpc5.

Its subcellular location is the cytoplasm. It is found in the cytoskeleton. The protein resides in the cell projection. It localises to the nucleus. Its function is as follows. Component of the Arp2/3 complex, a multiprotein complex that mediates actin polymerization upon stimulation by nucleation-promoting factor (NPF). The Arp2/3 complex mediates the formation of branched actin networks in the cytoplasm, providing the force for cell motility. In addition to its role in the cytoplasmic cytoskeleton, the Arp2/3 complex also promotes actin polymerization in the nucleus, thereby regulating gene transcription and repair of damaged DNA. The Arp2/3 complex promotes homologous recombination (HR) repair in response to DNA damage by promoting nuclear actin polymerization, leading to drive motility of double-strand breaks (DSBs). This chain is Actin-related protein 2/3 complex subunit 5-C (arpc5-c), found in Xenopus laevis (African clawed frog).